The sequence spans 247 residues: C-type lectin domain family 7 member A (247 aa).

Residues 1 to 44 (MEYHPDLENLDEDGYTQLHFDSRSNTRIAVVSEKGSCVASPPWR) lie on the Cytoplasmic side of the membrane. Positions 15-18 (YTQL) match the ITAM-like motif. The helical; Signal-anchor for type II membrane protein transmembrane segment at 45–65 (LIAVILGILCLVILVIAVVLG) threads the bilayer. Residues 66–247 (TMAIWRPNSG…CSICEKKFSM (182 aa)) lie on the Extracellular side of the membrane. Residues 81-105 (NGYFPSRNKENHSQPTQSPLEESVT) are disordered. N91 carries N-linked (GlcNAc...) asparagine glycosylation. Polar residues predominate over residues 93–105 (SQPTQSPLEESVT). 3 disulfides stabilise this stretch: C120-C131, C148-C241, and C220-C233. The C-type lectin domain maps to 127–242 (YEKSCYLFSP…CSVPSCSICE (116 aa)). Position 146 to 153 (146 to 153 (RQCSQLGS)) interacts with (1,3-beta-D-glucosyl)n. A divalent metal cation contacts are provided by K157, D159, and E163. E195 provides a ligand contact to (1,3-beta-D-glucosyl)n. E242 provides a ligand contact to a divalent metal cation.

As to quaternary structure, homodimer. Interacts with SYK; participates in leukocyte activation in presence of fungal pathogens. Interacts with CD37; this interaction controls CLEC7A-mediated IL-6 production. In terms of processing, phosphorylated on tyrosine residues in response to beta-glucan binding. In terms of tissue distribution, detected in dendritic cells, in paracortical and medullary regions of lymph nodes, and in spleen red pulp and white pulp.

The protein resides in the cell membrane. In terms of biological role, lectin that functions as a pattern recognizing receptor (PRR) specific for beta-1,3-linked and beta-1,6-linked glucans, which constitute cell wall constituents from pathogenic bacteria and fungi. Necessary for the TLR2-mediated inflammatory response and activation of NF-kappa-B: upon beta-glucan binding, recruits SYK via its ITAM motif and promotes a signaling cascade that activates some CARD domain-BCL10-MALT1 (CBM) signalosomes, leading to the activation of NF-kappa-B and MAP kinase p38 (MAPK11, MAPK12, MAPK13 and/or MAPK14) pathways which stimulate expression of genes encoding pro-inflammatory cytokines and chemokines. Enhances cytokine production in macrophages and dendritic cells. Mediates production of reactive oxygen species in the cell. Mediates phagocytosis of C.albicans conidia. Binds T-cells in a way that does not involve their surface glycans and plays a role in T-cell activation. Stimulates T-cell proliferation. Induces phosphorylation of SCIMP after binding beta-glucans. This is C-type lectin domain family 7 member A (CLEC7A) from Macaca mulatta (Rhesus macaque).